The chain runs to 393 residues: E3 ubiquitin-protein transferase RMND5B (393 aa).

The residue at position 1 (methionine 1) is an N-acetylmethionine. The region spanning 116-148 (QQQILQMAIVEHLYQQGMLSVAEELCQESTLNV) is the LisH domain. The CTLH domain maps to 155–212 (PFLELNRILEALHEQDLGPALEWAVSHRQRLLELNSSLEFKLHRLHFIRLLAGGPEKQ). Residues 338–379 (CPILRQQTSDSNPPIKLICGHVISRDALNKLINGGKLKCPYC) form an RING-Gid-type zinc finger.

As to quaternary structure, identified in the CTLH complex that contains GID4, RANBP9 and/or RANBP10, MKLN1, MAEA, RMND5A (or alternatively its paralog RMND5B), GID8, ARMC8, WDR26 and YPEL5. Within this complex, MAEA, RMND5A (or alternatively its paralog RMND5B), GID8, WDR26, and RANBP9 and/or RANBP10 form the catalytic core, while GID4, MKLN1, ARMC8 and YPEL5 have ancillary roles.

It localises to the cytoplasm. It is found in the cytosol. It catalyses the reaction S-ubiquitinyl-[E2 ubiquitin-conjugating enzyme]-L-cysteine + [acceptor protein]-L-lysine = [E2 ubiquitin-conjugating enzyme]-L-cysteine + N(6)-ubiquitinyl-[acceptor protein]-L-lysine.. Its function is as follows. Core component of the CTLH E3 ubiquitin-protein ligase complex that selectively accepts ubiquitin from UBE2H and mediates ubiquitination and subsequent proteasomal degradation of the transcription factor HBP1. MAEA and RMND5A are both required for catalytic activity of the CTLH E3 ubiquitin-protein ligase complex. Catalytic activity of the complex is required for normal cell proliferation. The CTLH E3 ubiquitin-protein ligase complex is not required for the degradation of enzymes involved in gluconeogenesis, such as FBP1. This is E3 ubiquitin-protein transferase RMND5B (Rmnd5b) from Mus musculus (Mouse).